The following is a 337-amino-acid chain: Pyridoxal 5'-phosphate synthase subunit PdxS (337 aa).

Asp-63 serves as a coordination point for D-ribose 5-phosphate. Lys-120 (schiff-base intermediate with D-ribose 5-phosphate) is an active-site residue. A D-ribose 5-phosphate-binding site is contributed by Gly-192. Lys-204 is a D-glyceraldehyde 3-phosphate binding site. D-ribose 5-phosphate is bound by residues Gly-253 and 274 to 275; that span reads GS.

This sequence belongs to the PdxS/SNZ family. As to quaternary structure, in the presence of PdxT, forms a dodecamer of heterodimers.

The enzyme catalyses aldehydo-D-ribose 5-phosphate + D-glyceraldehyde 3-phosphate + L-glutamine = pyridoxal 5'-phosphate + L-glutamate + phosphate + 3 H2O + H(+). It functions in the pathway cofactor biosynthesis; pyridoxal 5'-phosphate biosynthesis. Its function is as follows. Catalyzes the formation of pyridoxal 5'-phosphate from ribose 5-phosphate (RBP), glyceraldehyde 3-phosphate (G3P) and ammonia. The ammonia is provided by the PdxT subunit. Can also use ribulose 5-phosphate and dihydroxyacetone phosphate as substrates, resulting from enzyme-catalyzed isomerization of RBP and G3P, respectively. The protein is Pyridoxal 5'-phosphate synthase subunit PdxS of Aeropyrum pernix (strain ATCC 700893 / DSM 11879 / JCM 9820 / NBRC 100138 / K1).